The primary structure comprises 200 residues: Polyadenylate-binding protein 1-like 2 (200 aa).

2 consecutive RRM domains span residues 2–80 and 90–166; these read ASLY…WSQR and GNVF…RFKS. A disordered region spans residues 170-200; the sequence is REAERGAWARQSTSADVKDFEEDTDEEATLR. Acidic residues predominate over residues 188 to 200; the sequence is DFEEDTDEEATLR.

This is Polyadenylate-binding protein 1-like 2 (PABPC1L2A) from Homo sapiens (Human).